The following is a 368-amino-acid chain: MFLQPLLAKKIIAEVKKMYEREVIIVNTDGLIMAGTNDERVGQFHEGALICAKERRSVIITKEDETRLKGVKAGINLPVFFDHDVIAVFGLTGEPAEIQPFGELLRKMTELFIKESRHLEQSQWRERMLESFMIDWLQLKEWSPSFLEKAQLLGVDLSSRRQMILIQGYEWSPHDIEQMARSWKSSYPADLFIRWGNERILINHEVPQHEQRDRLLRKILHICSFANTASSQYTAAGAGRAVASSSLTDSYEQAEKALAVSLKRKTPIFEEDLKLDMCLTEISPGTRNEFPQRVLGKALEHQELMNTIRTFFHHDLSLKQTAEDMHIHINTLRYRLAKAEQLTGLRFDRTEDVVTMYVALYFLDQDTK.

Belongs to the CdaR family.

This is an uncharacterized protein from Bacillus subtilis (strain 168).